The chain runs to 377 residues: 23S rRNA (uracil(747)-C(5))-methyltransferase RlmC (377 aa).

[4Fe-4S] cluster contacts are provided by C3, C11, C14, and C87. Positions 212, 241, 262, and 307 each coordinate S-adenosyl-L-methionine. C334 serves as the catalytic Nucleophile.

The protein belongs to the class I-like SAM-binding methyltransferase superfamily. RNA M5U methyltransferase family. RlmC subfamily.

The enzyme catalyses uridine(747) in 23S rRNA + S-adenosyl-L-methionine = 5-methyluridine(747) in 23S rRNA + S-adenosyl-L-homocysteine + H(+). In terms of biological role, catalyzes the formation of 5-methyl-uridine at position 747 (m5U747) in 23S rRNA. The chain is 23S rRNA (uracil(747)-C(5))-methyltransferase RlmC from Edwardsiella ictaluri (strain 93-146).